A 317-amino-acid chain; its full sequence is Transaldolase (317 aa).

The active-site Schiff-base intermediate with substrate is Lys-132.

It belongs to the transaldolase family. Type 1 subfamily. As to quaternary structure, homodimer.

It localises to the cytoplasm. It carries out the reaction D-sedoheptulose 7-phosphate + D-glyceraldehyde 3-phosphate = D-erythrose 4-phosphate + beta-D-fructose 6-phosphate. The protein operates within carbohydrate degradation; pentose phosphate pathway; D-glyceraldehyde 3-phosphate and beta-D-fructose 6-phosphate from D-ribose 5-phosphate and D-xylulose 5-phosphate (non-oxidative stage): step 2/3. Functionally, transaldolase is important for the balance of metabolites in the pentose-phosphate pathway. The polypeptide is Transaldolase (Histophilus somni (strain 129Pt) (Haemophilus somnus)).